Consider the following 573-residue polypeptide: Proline--tRNA ligase (573 aa).

This sequence belongs to the class-II aminoacyl-tRNA synthetase family. ProS type 1 subfamily. In terms of assembly, homodimer.

It localises to the cytoplasm. The enzyme catalyses tRNA(Pro) + L-proline + ATP = L-prolyl-tRNA(Pro) + AMP + diphosphate. In terms of biological role, catalyzes the attachment of proline to tRNA(Pro) in a two-step reaction: proline is first activated by ATP to form Pro-AMP and then transferred to the acceptor end of tRNA(Pro). As ProRS can inadvertently accommodate and process non-cognate amino acids such as alanine and cysteine, to avoid such errors it has two additional distinct editing activities against alanine. One activity is designated as 'pretransfer' editing and involves the tRNA(Pro)-independent hydrolysis of activated Ala-AMP. The other activity is designated 'posttransfer' editing and involves deacylation of mischarged Ala-tRNA(Pro). The misacylated Cys-tRNA(Pro) is not edited by ProRS. This chain is Proline--tRNA ligase, found in Methylobacillus flagellatus (strain ATCC 51484 / DSM 6875 / VKM B-1610 / KT).